The primary structure comprises 143 residues: uncharacterized protein (143 aa).

The disordered stretch occupies residues 111–143 (VTQDISHTSGKSPTPKAKSSSPKKSKKKNWIPL). Residues 119–130 (SGKSPTPKAKSS) show a composition bias toward low complexity. The span at 131–143 (SPKKSKKKNWIPL) shows a compositional bias: basic residues.

It belongs to the chlamydial CPn_0742/CT_635/TC_0003 family.

This is an uncharacterized protein from Chlamydia muridarum (strain MoPn / Nigg).